Here is a 399-residue protein sequence, read N- to C-terminus: Guanine nucleotide-binding protein G(f) subunit alpha (399 aa).

The G-alpha domain occupies 46 to 399 (TTVKILLLGT…SENVSSMGLF (354 aa)). Residues 49-62 (KILLLGTAESGKTT) are G1 motif. GTP-binding positions include 54 to 61 (GTAESGKT), 188 to 194 (LHSRKIT), 221 to 225 (DVGGQ), 290 to 293 (NKYD), and Ala-371. Positions 186–194 (DILHSRKIT) are G2 motif. Thr-194 contacts Mg(2+). A G3 motif region spans residues 217–226 (FQMYDVGGQR). The interval 286 to 293 (IVFLNKYD) is G4 motif. Residues 369 to 374 (TVATDT) form a G5 motif region.

The protein belongs to the G-alpha family. In terms of assembly, g proteins are composed of 3 units; alpha, beta and gamma. The alpha chain contains the guanine nucleotide binding site. As to expression, during embryogenesis, expressed primarily in the developing gut and transiently in the amnioserosa.

In terms of biological role, guanine nucleotide-binding proteins (G proteins) are involved as modulators or transducers in various transmembrane signaling systems. This is Guanine nucleotide-binding protein G(f) subunit alpha (Galphaf) from Drosophila melanogaster (Fruit fly).